The primary structure comprises 301 residues: Small ribosomal subunit biogenesis GTPase RsgA (301 aa).

Positions 65-224 constitute a CP-type G domain; sequence YNQLIRPKVA…LVDTPGFGNL (160 aa). GTP is bound by residues 115–118 and 167–175; these read SKYD and GNSGVGKST. Residues Cys-247, Cys-252, His-254, and Cys-260 each contribute to the Zn(2+) site.

Belongs to the TRAFAC class YlqF/YawG GTPase family. RsgA subfamily. Monomer. Associates with 30S ribosomal subunit, binds 16S rRNA. The cofactor is Zn(2+).

It localises to the cytoplasm. Its function is as follows. One of several proteins that assist in the late maturation steps of the functional core of the 30S ribosomal subunit. Helps release RbfA from mature subunits. May play a role in the assembly of ribosomal proteins into the subunit. Circularly permuted GTPase that catalyzes slow GTP hydrolysis, GTPase activity is stimulated by the 30S ribosomal subunit. The sequence is that of Small ribosomal subunit biogenesis GTPase RsgA from Ureaplasma urealyticum serovar 10 (strain ATCC 33699 / Western).